We begin with the raw amino-acid sequence, 347 residues long: N-acetyl-gamma-glutamyl-phosphate reductase (347 aa).

Residue Cys-153 is part of the active site.

The protein belongs to the NAGSA dehydrogenase family. Type 1 subfamily.

The protein localises to the cytoplasm. The enzyme catalyses N-acetyl-L-glutamate 5-semialdehyde + phosphate + NADP(+) = N-acetyl-L-glutamyl 5-phosphate + NADPH + H(+). It functions in the pathway amino-acid biosynthesis; L-arginine biosynthesis; N(2)-acetyl-L-ornithine from L-glutamate: step 3/4. Its function is as follows. Catalyzes the NADPH-dependent reduction of N-acetyl-5-glutamyl phosphate to yield N-acetyl-L-glutamate 5-semialdehyde. The chain is N-acetyl-gamma-glutamyl-phosphate reductase from Mycobacterium leprae (strain Br4923).